An 829-amino-acid chain; its full sequence is Leucine--tRNA ligase (829 aa).

Residues 42–52 (PYPSGNLHMGH) carry the 'HIGH' region motif. Residues 582-586 (KMSKS) carry the 'KMSKS' region motif. Lys-585 is a binding site for ATP.

It belongs to the class-I aminoacyl-tRNA synthetase family.

The protein localises to the cytoplasm. It catalyses the reaction tRNA(Leu) + L-leucine + ATP = L-leucyl-tRNA(Leu) + AMP + diphosphate. The protein is Leucine--tRNA ligase of Moorella thermoacetica (strain ATCC 39073 / JCM 9320).